The chain runs to 87 residues: Scorpine-like peptide Tco 41.46-2 (87 aa).

Residues 1–19 (MERKLALLLFLGMVTLASC) form the signal peptide. One can recognise a BetaSPN-type CS-alpha/beta domain in the interval 53-87 (QFGCPAYEGYCNNHCQDIERKDGECHGFKCKCAKD). 3 disulfides stabilise this stretch: Cys56–Cys77, Cys63–Cys82, and Cys67–Cys84.

This sequence belongs to the long chain scorpion toxin family. Class 1 subfamily. In terms of tissue distribution, expressed by the venom gland.

The protein localises to the secreted. May have antibacterial activity. Its function is as follows. Inhibits voltage-gated potassium channel. Functionally, does not induce hemolytic activity, lactate dehydrogenase (LDH) release from mast cells, mast cell degranulation, and antimicrobial effects. In vivo, injection into mice causes moderate edema formation, but induces very weak or no change in nociceptive sensibility. It also reduces mice locomotion, suggesting an increase in anxiety, but causes no alteration in rearing (standing on hind limbs). This Tityus costatus (Brazilian scorpion) protein is Scorpine-like peptide Tco 41.46-2.